The chain runs to 491 residues: Protein nucleotidyltransferase YdiU (491 aa).

The ATP site is built by Gly-94, Gly-96, Arg-97, Lys-117, Asp-129, Gly-130, Arg-180, and Arg-187. Asp-256 serves as the catalytic Proton acceptor. Mg(2+)-binding residues include Asn-257 and Asp-266. Asp-266 contacts ATP.

Belongs to the SELO family. Mg(2+) serves as cofactor. Requires Mn(2+) as cofactor.

It carries out the reaction L-seryl-[protein] + ATP = 3-O-(5'-adenylyl)-L-seryl-[protein] + diphosphate. The enzyme catalyses L-threonyl-[protein] + ATP = 3-O-(5'-adenylyl)-L-threonyl-[protein] + diphosphate. It catalyses the reaction L-tyrosyl-[protein] + ATP = O-(5'-adenylyl)-L-tyrosyl-[protein] + diphosphate. The catalysed reaction is L-histidyl-[protein] + UTP = N(tele)-(5'-uridylyl)-L-histidyl-[protein] + diphosphate. It carries out the reaction L-seryl-[protein] + UTP = O-(5'-uridylyl)-L-seryl-[protein] + diphosphate. The enzyme catalyses L-tyrosyl-[protein] + UTP = O-(5'-uridylyl)-L-tyrosyl-[protein] + diphosphate. In terms of biological role, nucleotidyltransferase involved in the post-translational modification of proteins. It can catalyze the addition of adenosine monophosphate (AMP) or uridine monophosphate (UMP) to a protein, resulting in modifications known as AMPylation and UMPylation. In Clostridium botulinum (strain Okra / Type B1), this protein is Protein nucleotidyltransferase YdiU.